We begin with the raw amino-acid sequence, 454 residues long: Oxygen-dependent coproporphyrinogen-III oxidase, mitochondrial (454 aa).

Residues 1-110 (MALQLGRLSS…MLPKTSGTRA (110 aa)) constitute a mitochondrion transit peptide. Residues 43–70 (AAGRVCRPPGPAGTEQSRGLGHGSTSRG) are disordered. Ser-112 carries the post-translational modification Phosphoserine. Positions 193-202 (VLQDGCVFEK) are important for dimerization. Residue Ser-244 participates in coproporphyrinogen III binding. His-258 serves as the catalytic Proton donor. 260–262 (NYR) lines the coproporphyrinogen III pocket. An important for dimerization region spans residues 392 to 428 (YVEFNLLYDRGTKFGLFTPGSRIESILMSLPLTARWE). An N6-acetyllysine; alternate modification is found at Lys-404. Lys-404 bears the N6-succinyllysine; alternate mark. 411–413 (GSR) contributes to the coproporphyrinogen III binding site.

Belongs to the aerobic coproporphyrinogen-III oxidase family. In terms of assembly, homodimer.

Its subcellular location is the mitochondrion intermembrane space. It carries out the reaction coproporphyrinogen III + O2 + 2 H(+) = protoporphyrinogen IX + 2 CO2 + 2 H2O. It participates in porphyrin-containing compound metabolism; protoporphyrin-IX biosynthesis; protoporphyrinogen-IX from coproporphyrinogen-III (O2 route): step 1/1. Catalyzes the aerobic oxidative decarboxylation of propionate groups of rings A and B of coproporphyrinogen-III to yield the vinyl groups in protoporphyrinogen-IX and participates to the sixth step in the heme biosynthetic pathway. The sequence is that of Oxygen-dependent coproporphyrinogen-III oxidase, mitochondrial from Homo sapiens (Human).